The sequence spans 437 residues: Glycogen synthase (437 aa).

An ADP-alpha-D-glucose-binding site is contributed by K15.

The protein belongs to the glycosyltransferase 1 family. Bacterial/plant glycogen synthase subfamily.

It carries out the reaction [(1-&gt;4)-alpha-D-glucosyl](n) + ADP-alpha-D-glucose = [(1-&gt;4)-alpha-D-glucosyl](n+1) + ADP + H(+). It functions in the pathway glycan biosynthesis; glycogen biosynthesis. Synthesizes alpha-1,4-glucan chains using ADP-glucose. The polypeptide is Glycogen synthase (Thermus thermophilus (strain ATCC 27634 / DSM 579 / HB8)).